Consider the following 386-residue polypeptide: Ribosomal RNA small subunit methyltransferase H (386 aa).

Residues 97–99, Asp-116, Tyr-143, Asp-167, and Gln-174 contribute to the S-adenosyl-L-methionine site; that span reads GGH.

Belongs to the methyltransferase superfamily. RsmH family.

It is found in the cytoplasm. The enzyme catalyses cytidine(1402) in 16S rRNA + S-adenosyl-L-methionine = N(4)-methylcytidine(1402) in 16S rRNA + S-adenosyl-L-homocysteine + H(+). In terms of biological role, specifically methylates the N4 position of cytidine in position 1402 (C1402) of 16S rRNA. The chain is Ribosomal RNA small subunit methyltransferase H from Mycobacterium avium (strain 104).